The primary structure comprises 534 residues: Phosphoenolpyruvate carboxykinase (ATP) (534 aa).

Positions 59, 200, and 206 each coordinate substrate. Residues Lys206, His225, and 242 to 250 (GLSGTGKTT) each bind ATP. Residues Lys206 and His225 each coordinate Mn(2+). Asp263 is a binding site for Mn(2+). ATP-binding positions include Glu291, Arg327, 443–444 (RI), and Thr449. Arg327 contacts substrate.

This sequence belongs to the phosphoenolpyruvate carboxykinase (ATP) family. Mn(2+) is required as a cofactor.

Its subcellular location is the cytoplasm. It carries out the reaction oxaloacetate + ATP = phosphoenolpyruvate + ADP + CO2. It participates in carbohydrate biosynthesis; gluconeogenesis. Functionally, involved in the gluconeogenesis. Catalyzes the conversion of oxaloacetate (OAA) to phosphoenolpyruvate (PEP) through direct phosphoryl transfer between the nucleoside triphosphate and OAA. The sequence is that of Phosphoenolpyruvate carboxykinase (ATP) from Lachnospira eligens (strain ATCC 27750 / DSM 3376 / VPI C15-48 / C15-B4) (Eubacterium eligens).